The chain runs to 25 residues: Chitinolytic alpha-amylase inhibitor PvCAI (25 aa).

As to quaternary structure, homodimer.

It carries out the reaction Random endo-hydrolysis of N-acetyl-beta-D-glucosaminide (1-&gt;4)-beta-linkages in chitin and chitodextrins.. Alpha-amylase inhibitor, active against Z.subfasciatus alpha-amylase (ZSA) but not porcine pancreatic alpha-amylase (PPA). Has chitinase activity. This Phaseolus vulgaris (Kidney bean) protein is Chitinolytic alpha-amylase inhibitor PvCAI.